Reading from the N-terminus, the 231-residue chain is Large ribosomal subunit protein uL1 (231 aa).

It belongs to the universal ribosomal protein uL1 family. Part of the 50S ribosomal subunit.

In terms of biological role, binds directly to 23S rRNA. The L1 stalk is quite mobile in the ribosome, and is involved in E site tRNA release. Functionally, protein L1 is also a translational repressor protein, it controls the translation of the L11 operon by binding to its mRNA. The protein is Large ribosomal subunit protein uL1 of Pseudomonas fluorescens (strain ATCC BAA-477 / NRRL B-23932 / Pf-5).